Reading from the N-terminus, the 65-residue chain is Large ribosomal subunit protein bL35 (65 aa).

The interval 1-51 is disordered; the sequence is MPKMKTNRAAAKRFKKTANGGLKSANAYTSHRFHGKTKKQRRQLRGTDMMD. Residues 31-44 show a composition bias toward basic residues; sequence HRFHGKTKKQRRQL.

The protein belongs to the bacterial ribosomal protein bL35 family.

In Pediococcus pentosaceus (strain ATCC 25745 / CCUG 21536 / LMG 10740 / 183-1w), this protein is Large ribosomal subunit protein bL35.